Here is a 138-residue protein sequence, read N- to C-terminus: Small ribosomal subunit protein uS11c (138 aa).

Positions M1–A22 are disordered. Residues R12 to A22 are compositionally biased toward basic residues.

The protein belongs to the universal ribosomal protein uS11 family. As to quaternary structure, part of the 30S ribosomal subunit.

It localises to the plastid. The protein resides in the chloroplast. The sequence is that of Small ribosomal subunit protein uS11c from Fagopyrum esculentum subsp. ancestrale (Wild buckwheat).